The chain runs to 583 residues: Threonine--tRNA ligase (583 aa).

The interval 185 to 478 (DHRKLGRELN…LVEHYGGAFP (294 aa)) is catalytic. Cys-278, His-329, and His-455 together coordinate Zn(2+).

It belongs to the class-II aminoacyl-tRNA synthetase family. In terms of assembly, homodimer. Zn(2+) serves as cofactor.

It localises to the cytoplasm. The enzyme catalyses tRNA(Thr) + L-threonine + ATP = L-threonyl-tRNA(Thr) + AMP + diphosphate + H(+). Catalyzes the attachment of threonine to tRNA(Thr) in a two-step reaction: L-threonine is first activated by ATP to form Thr-AMP and then transferred to the acceptor end of tRNA(Thr). Also edits incorrectly charged L-seryl-tRNA(Thr). This is Threonine--tRNA ligase from Borrelia recurrentis (strain A1).